The following is a 425-amino-acid chain: Protein upregulated in glial subsets pugs-5 (425 aa).

Basic and acidic residues predominate over residues 355-373 (NNNDVEKSTQIEKKPEKQG). Residues 355–407 (NNNDVEKSTQIEKKPEKQGPEIQEEVVEMETVKDEQPPKTSAVRFKENSPRLM) are disordered.

In Caenorhabditis elegans, this protein is Protein upregulated in glial subsets pugs-5.